The following is a 538-amino-acid chain: Bifunctional purine biosynthesis protein PurH (538 aa).

The MGS-like domain maps to 6 to 158 (KHIPAPDLHR…KNHAYVATVV (153 aa)).

This sequence belongs to the PurH family.

The catalysed reaction is (6R)-10-formyltetrahydrofolate + 5-amino-1-(5-phospho-beta-D-ribosyl)imidazole-4-carboxamide = 5-formamido-1-(5-phospho-D-ribosyl)imidazole-4-carboxamide + (6S)-5,6,7,8-tetrahydrofolate. It carries out the reaction IMP + H2O = 5-formamido-1-(5-phospho-D-ribosyl)imidazole-4-carboxamide. It participates in purine metabolism; IMP biosynthesis via de novo pathway; 5-formamido-1-(5-phospho-D-ribosyl)imidazole-4-carboxamide from 5-amino-1-(5-phospho-D-ribosyl)imidazole-4-carboxamide (10-formyl THF route): step 1/1. It functions in the pathway purine metabolism; IMP biosynthesis via de novo pathway; IMP from 5-formamido-1-(5-phospho-D-ribosyl)imidazole-4-carboxamide: step 1/1. This Brucella melitensis biotype 2 (strain ATCC 23457) protein is Bifunctional purine biosynthesis protein PurH.